A 695-amino-acid chain; its full sequence is Electrogenic aspartate/glutamate antiporter Aralar, mitochondrial (695 aa).

The segment at 1-310 is N-terminal domain; that stretch reads MPMHIPFPFN…DYSDLSNIAP (310 aa). The Mitochondrial intermembrane portion of the chain corresponds to 2–345; that stretch reads PMHIPFPFNW…FIQVLESSYR (344 aa). 4 EF-hand domains span residues 71–104, 105–140, 142–175, and 176–211; these read FNDESVRLLANIADTSKDGLISFSEFQAFEGLLC, TPDALYRTAFQLFDRKGNGTVSYADFADVVQKTELH, KIPFSLDGPFIKRYFGDKKQRLINYAEFTQLLHD, and FHEEHAMEAFRSKDPAGTGFISPLDFQDIIVNVKRH. Ca(2+) is bound by residues Asp84, Ser86, Asp88, Leu90, Glu95, Asp118, Asn122, Thr124, and Asp129. Ca(2+) is bound by residues Asp189, Thr193, and Asp200. Residues 311-327 are linker loop domain; it reads EHYTKHMTHRLAEIKAV. The tract at residues 336-627 is carrier domain; the sequence is FIQVLESSYR…RLFYVDFGGT (292 aa). 3 Solcar repeats span residues 340-431, 439-523, and 531-619; these read LESS…VRDK, IPTW…TKAM, and NHPL…LQRL. Residues 346-363 traverse the membrane as a helical segment; it reads FTLGSFAGAVGATVVYPI. The Mitochondrial matrix segment spans residues 364-405; that stretch reads DLVKTRMQNQRAGSYIGEVAYRNSWDCFKKVVRHEGFMGLYR. A helical membrane pass occupies residues 406-425; sequence GLLPQLMGVAPEKAIKLTVN. The Mitochondrial intermembrane portion of the chain corresponds to 426 to 448; that stretch reads DLVRDKLTDKKGNIPTWAEVLAG. A helical transmembrane segment spans residues 449–462; it reads GCAGASQVVFTNPL. Over 463 to 497 the chain is Mitochondrial matrix; sequence EIVKIRLQVAGEIASGSKIRAWSVVRELGLFGLYK. The helical transmembrane segment at 498–517 threads the bilayer; sequence GARACLLRDVPFSAIYFPTY. Residues 518–536 lie on the Mitochondrial intermembrane side of the membrane; the sequence is AHTKAMMADKDGYNHPLTL. The helical transmembrane segment at 537-554 threads the bilayer; that stretch reads LAAGAIAGVPAASLVTPA. At 555–593 the chain is on the mitochondrial matrix side; that stretch reads DVIKTRLQVVARSGQTTYTGVWDATKKIMAEEGPRAFWK. The chain crosses the membrane as a helical span at residues 594–613; sequence GTAARVFRSSPQFGVTLVTY. The Mitochondrial intermembrane segment spans residues 614–695; sequence ELLQRLFYVD…AASPSTATGS (82 aa). Residues 628–695 are C-terminal domain; it reads QPKGSEAHKI…AASPSTATGS (68 aa).

This sequence belongs to the mitochondrial carrier (TC 2.A.29) family. As to quaternary structure, homodimer (via N-terminus). The cofactor is Ca(2+). In terms of tissue distribution, expressed throughout the body in both males and females, including in ovaries and testes. Specifically expressed in female ovaries. As to expression, expressed throughout the body in both males and females but absent from ovaries and testes.

Its subcellular location is the mitochondrion inner membrane. It carries out the reaction L-aspartate(in) + L-glutamate(out) + H(+)(out) = L-aspartate(out) + L-glutamate(in) + H(+)(in). It catalyses the reaction 3-sulfino-L-alanine(out) + L-glutamate(in) + H(+)(in) = 3-sulfino-L-alanine(in) + L-glutamate(out) + H(+)(out). The catalysed reaction is L-2-aminoadipate(in) + L-glutamate(out) + H(+)(out) = L-2-aminoadipate(out) + L-glutamate(in) + H(+)(in). The enzyme catalyses L-glutamine(in) + L-glutamate(out) + Na(+)(out) + H(+)(out) = L-glutamine(out) + L-glutamate(in) + Na(+)(in) + H(+)(in). With respect to regulation, activated by Ca(2+). Inhibited by p-chloromercuribenzoate, pyrocarbonate, mersalyl, tannic acid and N-ethylmaleimide. Its function is as follows. Mitochondrial electrogenic aspartate/glutamate antiporter that favors efflux of aspartate and entry of glutamate and proton within the mitochondria as part of the malate-aspartate shuttle. Also mediates the exchange of L-cysteinesulfinate (3-sulfino-L-alanine) for L-glutamate. Necessary for gamma-aminobutyric acid (GABA) uptake in brain mitochondria in response to increased mitochondrial membrane polarization; does not possess detectable GABA transport activity but role may be indirect. Possesses transport activity towards L-aspartate, L-glutamate and L-cysteinesulfinate (3-sulfino-L-alanine). L-glutamine transport activity is undetectable. GABA transport activity is undetectable. Functionally, possesses transport activity towards L-aspartate, L-glutamate and L-cysteinesulfinate (3-sulfino-L-alanine). Has a wider substrate specificity range that includes L-2-aminoadipate and L-glutamine. GABA transport activity is undetectable. The chain is Electrogenic aspartate/glutamate antiporter Aralar, mitochondrial from Drosophila melanogaster (Fruit fly).